Here is a 447-residue protein sequence, read N- to C-terminus: 3-phosphoshikimate 1-carboxyvinyltransferase (447 aa).

3 residues coordinate 3-phosphoshikimate: Lys25, Ser26, and Arg30. Lys25 contacts phosphoenolpyruvate. Positions 96 and 124 each coordinate phosphoenolpyruvate. Residues Ser171, Ser172, Gln173, Ser203, Asp325, and Lys352 each coordinate 3-phosphoshikimate. Gln173 serves as a coordination point for phosphoenolpyruvate. Asp325 serves as the catalytic Proton acceptor. The phosphoenolpyruvate site is built by Arg356, Arg400, and Lys425.

This sequence belongs to the EPSP synthase family. In terms of assembly, monomer.

Its subcellular location is the cytoplasm. It catalyses the reaction 3-phosphoshikimate + phosphoenolpyruvate = 5-O-(1-carboxyvinyl)-3-phosphoshikimate + phosphate. It functions in the pathway metabolic intermediate biosynthesis; chorismate biosynthesis; chorismate from D-erythrose 4-phosphate and phosphoenolpyruvate: step 6/7. Functionally, catalyzes the transfer of the enolpyruvyl moiety of phosphoenolpyruvate (PEP) to the 5-hydroxyl of shikimate-3-phosphate (S3P) to produce enolpyruvyl shikimate-3-phosphate and inorganic phosphate. This Bordetella petrii (strain ATCC BAA-461 / DSM 12804 / CCUG 43448) protein is 3-phosphoshikimate 1-carboxyvinyltransferase.